Consider the following 109-residue polypeptide: uncharacterized protein (109 aa).

The helical transmembrane segment at 75–95 threads the bilayer; that stretch reads MALFHTVFILWPHFCGILWTV.

The protein resides in the membrane. This is an uncharacterized protein from Saccharomyces cerevisiae (strain ATCC 204508 / S288c) (Baker's yeast).